The following is a 202-amino-acid chain: Cytochrome c oxidase assembly protein CtaG (202 aa).

Residues 1-14 are Cytoplasmic-facing; sequence MSENAGTPKKQGRN. A helical; Signal-anchor for type II membrane protein transmembrane segment spans residues 15-37; that stretch reads NGAVVMMCLSFVFGMGAMSYAAV. Residues 38–202 lie on the Periplasmic side of the membrane; that stretch reads PLYRIFCQVT…GGAEKIEKKL (165 aa).

This sequence belongs to the COX11/CtaG family.

The protein resides in the cell inner membrane. Its function is as follows. Exerts its effect at some terminal stage of cytochrome c oxidase synthesis, probably by being involved in the insertion of the copper B into subunit I. The chain is Cytochrome c oxidase assembly protein CtaG from Rhizobium johnstonii (strain DSM 114642 / LMG 32736 / 3841) (Rhizobium leguminosarum bv. viciae).